We begin with the raw amino-acid sequence, 218 residues long: Cytochrome b6 (218 aa).

A helical transmembrane segment spans residues 35-55 (IFYCLGGITLVCFLIQFATGF). Position 38 (cysteine 38) interacts with heme c. 2 residues coordinate heme b: histidine 89 and histidine 103. A run of 3 helical transmembrane segments spans residues 93–113 (ASMMVLMLILHVFRVYLTGGF), 119–139 (LTWVTGVTMAVITVSFGVTGY), and 189–209 (LHTFVMPWLLAVFMLMHFLMI). The heme b site is built by histidine 190 and histidine 205.

Belongs to the cytochrome b family. PetB subfamily. As to quaternary structure, the 4 large subunits of the cytochrome b6-f complex are cytochrome b6, subunit IV (17 kDa polypeptide, PetD), cytochrome f and the Rieske protein, while the 4 small subunits are PetG, PetL, PetM and PetN. The complex functions as a dimer. It depends on heme b as a cofactor. The cofactor is heme c.

It is found in the cellular thylakoid membrane. Component of the cytochrome b6-f complex, which mediates electron transfer between photosystem II (PSII) and photosystem I (PSI), cyclic electron flow around PSI, and state transitions. This is Cytochrome b6 from Synechococcus sp. (strain CC9605).